The sequence spans 124 residues: Colorectal cancer-associated protein 1 (124 aa).

Residues 77–97 traverse the membrane as a helical segment; it reads LYGCFCVGLVSGMAISVLLLA.

Expressed in gastrointestinal and immune tissue, as well as prostate, testis and ovary. Expressed in lamina propria and eosinophils but not in epithelial cells. Expression is greater in benign adjacent tissues than in colon tumors.

It is found in the membrane. This is Colorectal cancer-associated protein 1 (COLCA1) from Homo sapiens (Human).